The primary structure comprises 49 residues: Lectin alpha chain (49 aa).

The protein belongs to the leguminous lectin family. In terms of assembly, homotetramer. In terms of processing, the beta and gamma chains are produced by partial proteolytic processing of the lectin alpha chain by an asparaginyl endopeptidase. Mixture of 60% alpha lectin and 40% of its beta and gamma proteolytic fragments. As to expression, seed.

D-mannose/D-glucose-binding lectin. The chain is Lectin alpha chain from Dioclea violacea.